A 461-amino-acid chain; its full sequence is UDP-N-acetylmuramate--L-alanine ligase (461 aa).

112 to 118 (GTHGKTT) contributes to the ATP binding site.

This sequence belongs to the MurCDEF family.

The protein resides in the cytoplasm. The enzyme catalyses UDP-N-acetyl-alpha-D-muramate + L-alanine + ATP = UDP-N-acetyl-alpha-D-muramoyl-L-alanine + ADP + phosphate + H(+). The protein operates within cell wall biogenesis; peptidoglycan biosynthesis. Functionally, cell wall formation. The sequence is that of UDP-N-acetylmuramate--L-alanine ligase from Geobacter sp. (strain M21).